Consider the following 432-residue polypeptide: Adenylosuccinate synthetase (432 aa).

Residues 12–18 (GDEGKGK) and 40–42 (GHT) contribute to the GTP site. Catalysis depends on Asp13, which acts as the Proton acceptor. Asp13 and Gly40 together coordinate Mg(2+). IMP is bound by residues 13 to 16 (DEGK), 38 to 41 (NAGH), Thr132, Arg146, Gln226, Thr241, and Arg305. Catalysis depends on His41, which acts as the Proton donor. 301–307 (TVTGRKR) lines the substrate pocket. GTP-binding positions include Arg307, 333–335 (KLD), and 415–417 (STS).

This sequence belongs to the adenylosuccinate synthetase family. In terms of assembly, homodimer. It depends on Mg(2+) as a cofactor.

Its subcellular location is the cytoplasm. It catalyses the reaction IMP + L-aspartate + GTP = N(6)-(1,2-dicarboxyethyl)-AMP + GDP + phosphate + 2 H(+). It participates in purine metabolism; AMP biosynthesis via de novo pathway; AMP from IMP: step 1/2. Plays an important role in the de novo pathway of purine nucleotide biosynthesis. Catalyzes the first committed step in the biosynthesis of AMP from IMP. In Sinorhizobium fredii (strain NBRC 101917 / NGR234), this protein is Adenylosuccinate synthetase.